The chain runs to 220 residues: Orotate phosphoribosyltransferase (220 aa).

Lysine 26 serves as a coordination point for 5-phospho-alpha-D-ribose 1-diphosphate. 34–35 is a binding site for orotate; sequence FF. 5-phospho-alpha-D-ribose 1-diphosphate is bound by residues 72–73, arginine 99, lysine 100, lysine 103, histidine 105, and 125–133; these read YK and DDVISAGTS. Positions 129 and 157 each coordinate orotate.

The protein belongs to the purine/pyrimidine phosphoribosyltransferase family. PyrE subfamily. In terms of assembly, homodimer. Mg(2+) is required as a cofactor.

The enzyme catalyses orotidine 5'-phosphate + diphosphate = orotate + 5-phospho-alpha-D-ribose 1-diphosphate. It functions in the pathway pyrimidine metabolism; UMP biosynthesis via de novo pathway; UMP from orotate: step 1/2. In terms of biological role, catalyzes the transfer of a ribosyl phosphate group from 5-phosphoribose 1-diphosphate to orotate, leading to the formation of orotidine monophosphate (OMP). The protein is Orotate phosphoribosyltransferase of Nitrosococcus oceani (strain ATCC 19707 / BCRC 17464 / JCM 30415 / NCIMB 11848 / C-107).